A 173-amino-acid chain; its full sequence is uncharacterized protein (173 aa).

4 helical membrane passes run 13–35 (LQVI…PLLS), 50–72 (IIFI…FLGL), 107–129 (NYLI…KYLL), and 139–161 (GYLI…RLIL).

It localises to the cell membrane. This is an uncharacterized protein from Rickettsia prowazekii (strain Madrid E).